Consider the following 252-residue polypeptide: DNA-directed RNA polymerase III subunit rpc8 (252 aa).

The tract at residues 214 to 252 (WTNQSAGDDDENEEDGGENQDDEVAEDDGGEEPTIEEDE) is disordered. Positions 220–252 (GDDDENEEDGGENQDDEVAEDDGGEEPTIEEDE) are enriched in acidic residues.

It belongs to the eukaryotic RPB7/RPC8 RNA polymerase subunit family. As to quaternary structure, component of the RNA polymerase III (Pol III) complex consisting of several subunits.

It localises to the nucleus. In terms of biological role, DNA-dependent RNA polymerase catalyzes the transcription of DNA into RNA using the four ribonucleoside triphosphates as substrates. In Dictyostelium discoideum (Social amoeba), this protein is DNA-directed RNA polymerase III subunit rpc8 (polr3h-1).